We begin with the raw amino-acid sequence, 187 residues long: MNLSATLLLAFGMSMDAFAASIGKGATLHKPKFSEALRTGLIFGVIEAITPLVGWLLGLLATQFVLTWNHWIAFVLLVFLGGRMIIEGVRGCEEASEKIRRHSFWLLVTTAFATSLDAMAVGVGLAFLQVDIIKTALAIGCATLIMSTLGMMVGRFIGPLLGKRAEILGGVVLIGIGCQILWSHFAG.

6 helical membrane passes run 3-23 (LSAT…ASIG), 41-61 (LIFG…GLLA), 62-82 (TQFV…FLGG), 106-128 (LLVT…LAFL), 142-162 (ATLI…PLLG), and 167-187 (ILGG…HFAG).

The protein belongs to the MntP (TC 9.B.29) family.

It is found in the cell inner membrane. Functionally, probably functions as a manganese efflux pump. This chain is Putative manganese efflux pump MntP, found in Cronobacter sakazakii (strain ATCC BAA-894) (Enterobacter sakazakii).